We begin with the raw amino-acid sequence, 377 residues long: Diels-Alderase fsa2 (377 aa).

The protein belongs to the Diels-Alderase family.

It catalyses the reaction (5S)-3-[(2E,6R,8E,10E,12E)-2,6-dimethyltetradeca-2,8,10,12-tetraenoyl]-5-(hydroxymethyl)pyrrolidine-2,4-dione = trichosetin. Its pathway is mycotoxin biosynthesis. Its function is as follows. Diels-Alderase; part of the gene cluster that mediates the biosynthesis of equisetin, a trans-fused decalin-containing tetramic acid with antimicrobial activity. The PKS module of eqxS together with the enoylreductase eqxC catalyze the formation of the polyketide unit which is then conjugated to L-serine by the condensation domain of the eqxS NRPS module. Activity of the Dieckmann cyclase domain (RED) results in release of the Dieckmann product intermediate. Diels-Alderase eqx3 is involved in endo-selective Diels-Alder cycloaddition to form the decalin ring, leading to the production of N-desmethylequisetin also called trichosetin. Subsequent N-methylation is carried out by eqxD to give equisetin. This chain is Diels-Alderase fsa2, found in Fusarium heterosporum.